Consider the following 416-residue polypeptide: Gap junction alpha-3 protein (416 aa).

The stretch at 2-15 (GDWSFLGRLLENAQ) is an intramembrane region. The Cytoplasmic segment spans residues 16 to 19 (EHST). Residues 20–40 (VIGKVWLTVLFIFRILVLGAA) form a helical membrane-spanning segment. Topologically, residues 41–71 (AEEVWGDEQSDFTCNTQQPGCENVCYDRAFP) are extracellular. 3 disulfides stabilise this stretch: Cys54–Cys198, Cys61–Cys192, and Cys65–Cys187. Residues 72-92 (ISHIRFWALQIIFVSTPTLIY) traverse the membrane as a helical segment. The Cytoplasmic segment spans residues 93 to 158 (LGHVLHIVRM…GALLRTYVFN (66 aa)). A compositionally biased stretch (basic and acidic residues) spans 110–128 (EEELLRRDNPQHGRGREPM). The tract at residues 110–141 (EEELLRRDNPQHGRGREPMRTGSPRDPPLRDD) is disordered. Residues 159–179 (IIFKTLFEVGFIAGQYFLYGF) traverse the membrane as a helical segment. The Extracellular segment spans residues 180-207 (QLQPLYRCDRWPCPNTVDCFISRPTEKT). The helical transmembrane segment at 208–228 (IFVIFMLAVACASLVLNMLEI) threads the bilayer. At 229–416 (YHLGWKKLKQ…GRARPGDLAI (188 aa)) the chain is on the cytoplasmic side. Positions 336-416 (GAEPQTPASK…GRARPGDLAI (81 aa)) are disordered. The segment covering 342–353 (PASKPSSAASSP) has biased composition (low complexity).

Belongs to the connexin family. Alpha-type (group II) subfamily. As to quaternary structure, a hemichannel or connexon is composed of a hexamer of connexins. A functional gap junction is formed by the apposition of two hemichannels. Forms heteromeric channels with GJA8. In terms of tissue distribution, detected in eye lens (at protein level). Most abundant in lens, but also present in heart and kidney.

Its subcellular location is the cell membrane. The protein localises to the cell junction. It is found in the gap junction. Structural component of lens fiber gap junctions. Gap junctions are dodecameric channels that connect the cytoplasm of adjoining cells. They are formed by the docking of two hexameric hemichannels, one from each cell membrane. Small molecules and ions diffuse from one cell to a neighboring cell via the central pore. The sequence is that of Gap junction alpha-3 protein (Gja3) from Rattus norvegicus (Rat).